The sequence spans 353 residues: Photosystem II D2 protein (353 aa).

Threonine 2 is modified (N-acetylthreonine). Threonine 2 carries the post-translational modification Phosphothreonine. A helical transmembrane segment spans residues 41-61 (CAYFALGGWLTGTTFVTSWYT). Histidine 118 contacts chlorophyll a. The helical transmembrane segment at 125–141 (GFMLRQFELARSVQLRP) threads the bilayer. The pheophytin a site is built by glutamine 130 and asparagine 143. Residues 153 to 166 (VFVSVFLIYPLGQS) form a helical membrane-spanning segment. Histidine 198 is a binding site for chlorophyll a. A helical transmembrane segment spans residues 208 to 228 (AALLCAIHGATVENTLFEDGD). Positions 215 and 262 each coordinate a plastoquinone. Fe cation is bound at residue histidine 215. Position 269 (histidine 269) interacts with Fe cation. Residues 279–295 (GLWMSAIGVVGLALNLR) traverse the membrane as a helical segment.

Belongs to the reaction center PufL/M/PsbA/D family. In terms of assembly, PSII is composed of 1 copy each of membrane proteins PsbA, PsbB, PsbC, PsbD, PsbE, PsbF, PsbH, PsbI, PsbJ, PsbK, PsbL, PsbM, PsbT, PsbX, PsbY, PsbZ, Psb30/Ycf12, at least 3 peripheral proteins of the oxygen-evolving complex and a large number of cofactors. It forms dimeric complexes. The cofactor is The D1/D2 heterodimer binds P680, chlorophylls that are the primary electron donor of PSII, and subsequent electron acceptors. It shares a non-heme iron and each subunit binds pheophytin, quinone, additional chlorophylls, carotenoids and lipids. There is also a Cl(-1) ion associated with D1 and D2, which is required for oxygen evolution. The PSII complex binds additional chlorophylls, carotenoids and specific lipids..

It is found in the plastid. The protein resides in the chloroplast thylakoid membrane. It carries out the reaction 2 a plastoquinone + 4 hnu + 2 H2O = 2 a plastoquinol + O2. Functionally, photosystem II (PSII) is a light-driven water:plastoquinone oxidoreductase that uses light energy to abstract electrons from H(2)O, generating O(2) and a proton gradient subsequently used for ATP formation. It consists of a core antenna complex that captures photons, and an electron transfer chain that converts photonic excitation into a charge separation. The D1/D2 (PsbA/PsbD) reaction center heterodimer binds P680, the primary electron donor of PSII as well as several subsequent electron acceptors. D2 is needed for assembly of a stable PSII complex. The protein is Photosystem II D2 protein of Zygnema circumcarinatum (Green alga).